The sequence spans 236 residues: Phosphoglycolate phosphatase (236 aa).

Residue D14 is the Nucleophile of the active site. Mg(2+) is bound by residues D14, D16, and D177.

The protein belongs to the HAD-like hydrolase superfamily. CbbY/CbbZ/Gph/YieH family. The cofactor is Mg(2+).

It catalyses the reaction 2-phosphoglycolate + H2O = glycolate + phosphate. It functions in the pathway organic acid metabolism; glycolate biosynthesis; glycolate from 2-phosphoglycolate: step 1/1. In terms of biological role, specifically catalyzes the dephosphorylation of 2-phosphoglycolate. Is involved in the dissimilation of the intracellular 2-phosphoglycolate formed during the DNA repair of 3'-phosphoglycolate ends, a major class of DNA lesions induced by oxidative stress. The sequence is that of Phosphoglycolate phosphatase from Neisseria gonorrhoeae (strain ATCC 700825 / FA 1090).